The sequence spans 298 residues: Glycine--tRNA ligase alpha subunit (298 aa).

It belongs to the class-II aminoacyl-tRNA synthetase family. As to quaternary structure, tetramer of two alpha and two beta subunits.

The protein localises to the cytoplasm. It catalyses the reaction tRNA(Gly) + glycine + ATP = glycyl-tRNA(Gly) + AMP + diphosphate. The polypeptide is Glycine--tRNA ligase alpha subunit (Helicobacter pylori (strain P12)).